The sequence spans 208 residues: Ras-related protein Rab-6A (208 aa).

Position 2 is an N-acetylserine (S2). Positions 23, 24, 25, 26, 27, 28, 39, 40, 42, and 45 each coordinate GTP. T27 lines the Mg(2+) pocket. The short motif at 32-50 (RFMYDSFDNTYQATIGIDF) is the Switch 1 element. 2 residues coordinate Mg(2+): T45 and D68. The short motif at 69 to 88 (TAGQERFRSLIPSYIRDSTV) is the Switch 2 element. Residues G71, N126, K127, D129, S156, A157, and K158 each contribute to the GTP site. S184 carries the post-translational modification Phosphoserine. 2 S-geranylgeranyl cysteine lipidation sites follow: C206 and C208. Residue C208 is modified to Cysteine methyl ester.

This sequence belongs to the small GTPase superfamily. Rab family. In terms of assembly, interacts with BICDL1; leads to its accumulation in the pericentrosomal region. Interacts with SCYL1BP1. Interacts with VSP52. Interacts with RABGAP1. Interacts with GCC2 (via its GRIP domain). Interacts with RAB6IP1 (via its RUN 1 domain). Interacts with TMF1. Interacts with CIMAP3. Interacts (GTP-bound) with APBA1/MINT1 isoform 3, also called Mint1_826, but not with isoform 1. Interacts with RIC1; the interaction is direct with a preference for RAB6A-GDP. Interacts with RGP1; the interaction is direct with a preference for RAB6A-GDP. As to quaternary structure, interacts (GTP-bound) with DYNLRB1; the interaction is direct. Interacts with BICD1. Interacts with BICD2; the interaction is direct. Interacts (GTP-bound) with VPS13B. Interacts with BICD1. Interacts (GDP-bound) with DYNLRB1; the interaction is direct. Interacts (GTP-bound) with VPS13B. It depends on Mg(2+) as a cofactor. Prenylated.

It localises to the golgi apparatus membrane. It is found in the cytoplasmic vesicle. The protein localises to the secretory vesicle. The protein resides in the acrosome membrane. It carries out the reaction GTP + H2O = GDP + phosphate + H(+). Its activity is regulated as follows. Regulated by guanine nucleotide exchange factors (GEFs) which promote the exchange of bound GDP for free GTP. Regulated by GTPase activating proteins (GAPs) which increase the GTP hydrolysis activity. Inhibited by GDP dissociation inhibitors (GDIs). In terms of biological role, the small GTPases Rab are key regulators of intracellular membrane trafficking, from the formation of transport vesicles to their fusion with membranes. Rabs cycle between an inactive GDP-bound form and an active GTP-bound form that is able to recruit to membranes different sets of downstream effectors directly responsible for vesicle formation, movement, tethering and fusion. RAB6A acts as a regulator of COPI-independent retrograde transport from the Golgi apparatus towards the endoplasmic reticulum (ER). Has a low GTPase activity. Recruits VPS13B to the Golgi membrane. Plays a role in neuron projection development. The polypeptide is Ras-related protein Rab-6A (Mus musculus (Mouse)).